A 505-amino-acid polypeptide reads, in one-letter code: 2,3-bisphosphoglycerate-independent phosphoglycerate mutase (505 aa).

Mn(2+) is bound by residues Asp-13 and Ser-63. Ser-63 acts as the Phosphoserine intermediate in catalysis. Substrate is bound by residues His-124, 153–154 (RD), Arg-183, Arg-189, 254–257 (RADR), and Lys-329. The Mn(2+) site is built by Asp-395, His-399, Asp-436, His-437, and His-455.

It belongs to the BPG-independent phosphoglycerate mutase family. In terms of assembly, monomer. The cofactor is Mn(2+).

It carries out the reaction (2R)-2-phosphoglycerate = (2R)-3-phosphoglycerate. It participates in carbohydrate degradation; glycolysis; pyruvate from D-glyceraldehyde 3-phosphate: step 3/5. Catalyzes the interconversion of 2-phosphoglycerate and 3-phosphoglycerate. The protein is 2,3-bisphosphoglycerate-independent phosphoglycerate mutase of Agrobacterium fabrum (strain C58 / ATCC 33970) (Agrobacterium tumefaciens (strain C58)).